The chain runs to 457 residues: CUB1 family protein C30C2.08 (457 aa).

Coiled-coil stretches lie at residues 119 to 174 (TQND…NISK) and 418 to 448 (QELV…EERE).

The protein belongs to the CUB1 family.

Its subcellular location is the cytoplasm. The protein resides in the nucleus. In terms of biological role, involved in bleomycin tolerance with links to DNA repair and/or proteasome function. The polypeptide is CUB1 family protein C30C2.08 (Schizosaccharomyces pombe (strain 972 / ATCC 24843) (Fission yeast)).